The following is a 689-amino-acid chain: Glycine--tRNA ligase beta subunit (689 aa).

It belongs to the class-II aminoacyl-tRNA synthetase family. In terms of assembly, tetramer of two alpha and two beta subunits.

It is found in the cytoplasm. The enzyme catalyses tRNA(Gly) + glycine + ATP = glycyl-tRNA(Gly) + AMP + diphosphate. In Acinetobacter baumannii (strain AB307-0294), this protein is Glycine--tRNA ligase beta subunit.